The sequence spans 919 residues: MSHHVPNLYGTPIRDPHERKRNSASMGEVNQSVSSRNCERGSEKGTKQRKKASHACDQCRRKRIKCRFDKHTGVCQGCLEVGEKCQFIRVPLKRGPAKKRGSVVSIEKFSSDNDPLQYRPRTHSYPMNSGNNYLPSLARNSSFPSISSLFVPSITAQSQQFVKVPYDDIKRRSSLAILGSDSSISTEFGGNYRLDENLNVRQEGKDIVAKGMITPVEEMGACSSNVRRQGSQSLPIQEQRASPYINPFISGRSRLSSLSYTSEATTSEGNTQGKNQCMLTPNSVRSIEKERLNSLTAGFPNKKLGTDGRSDKWDKNSTWKPVYRSSNPSHPSTEKNVSLNQEASAKPLMLGTYRQFDATSFYKVLGIYYNFFHINFPVIPINKSKFTDMLDPEKPNVIDEIRQINNEIIQCFKTALEVLVFCKIKQRRSSKSTKSWSRDSLCDFQKGLYYIQNFNKCIADCFQSLITIKPVLKQNSSVIPSRIKFIYFSTIIVLNFILILAGEESSLLLGPSVGVFNEFQAHKLFLPFQNTSPMLLLNSNEESGDEILDYAVLFKRLYILLNILDTLQSFRLGQPKLINLNFGSAIETYFSDKTGHNQVVEKAPVALDNILRNLKLGEFITYFVLNRKSLQVNVPHHLLFTNQTDYGEFAVEKGEHDNIAGKFETLLKKKEILIRKLLNIEQKNDHILENCCNSDAEMKNIGELVCSMITLVSGILDSITNMNAENSVDLDSKPLPNAYFAQDSEEELMSPTQSITSNLASEENTRCTTKDLMGTVSIFMLPMVEECYNIISLIGPIPTTLISLYIRNGNMAKGINDRIMTLSTALNELVQITALFNTLEPFRKNAHDRAKRYYVSATSSTGCYESVMKSMYSGKCAASNASNVAPSEEENKKILKKFADIGWKLMDDSELGCCCCFFN.

The segment at 1–54 (MSHHVPNLYGTPIRDPHERKRNSASMGEVNQSVSSRNCERGSEKGTKQRKKASH) is disordered. The span at 23–36 (SASMGEVNQSVSSR) shows a compositional bias: polar residues. A compositionally biased stretch (basic and acidic residues) spans 37–46 (NCERGSEKGT). Residues 56–85 (CDQCRRKRIKCRFDKHTGVCQGCLEVGEKC) constitute a DNA-binding region (zn(2)-C6 fungal-type). Residues 297–338 (AGFPNKKLGTDGRSDKWDKNSTWKPVYRSSNPSHPSTEKNVS) are disordered. Over residues 304-317 (LGTDGRSDKWDKNS) the composition is skewed to basic and acidic residues. Positions 318–338 (TWKPVYRSSNPSHPSTEKNVS) are enriched in polar residues.

It belongs to the EDS1/RGT1 family. Binds DNA in a sequence-specific manner.

Its subcellular location is the nucleus. This chain is Transcriptional regulatory protein EDS1 (EDS1), found in Saccharomyces cerevisiae (strain ATCC 204508 / S288c) (Baker's yeast).